The sequence spans 1282 residues: Ribosome biogenesis protein BMS1 homolog (1282 aa).

The segment covering 1–24 (MEAKDQKKHRKKNSGPKAAKKKKR) has biased composition (basic residues). The disordered stretch occupies residues 1–43 (MEAKDQKKHRKKNSGPKAAKKKKRLLQDLQLGDEEDARKRNPK). Lys43 is covalently cross-linked (Glycyl lysine isopeptide (Lys-Gly) (interchain with G-Cter in SUMO2)). The region spanning 80-245 (PPPIVVVVMG…GRFITVMKFR (166 aa)) is the Bms1-type G domain. Residues 89–96 (GPPKVGKS) form a G1 region. 89–96 (GPPKVGKS) is a binding site for ATP. Residues 117-121 (PVTIV) form a G2 region. The G3 stretch occupies residues 132 to 135 (ECGC). Positions 184–187 (THLD) are G4. The residue at position 188 (Ser188) is a Phosphoserine. Residues 219–228 (LSGMVHGEYQ) are G5. 2 disordered regions span residues 397–557 (DSKP…ANCQ) and 575–667 (PTFD…ALKW). Residues Lys399 and Lys415 each participate in a glycyl lysine isopeptide (Lys-Gly) (interchain with G-Cter in SUMO2) cross-link. Acidic residues-rich tracts occupy residues 434–472 (GDED…ENAE) and 503–531 (DSDD…EDCT). A compositionally biased stretch (low complexity) spans 535–550 (KGISGSKAAGEGSKAG). Ser552 bears the Phosphoserine mark. Residues 588-610 (FASEDESEESSSLSAEEEDSENE) show a composition bias toward acidic residues. Ser625 and Ser639 each carry phosphoserine. A Glycyl lysine isopeptide (Lys-Gly) (interchain with G-Cter in SUMO2) cross-link involves residue Lys646. Basic and acidic residues predominate over residues 653-667 (EENNDSKETSGALKW). Phosphothreonine is present on Thr708. Disordered regions lie at residues 787-822 (ETGD…ESAK) and 1178-1202 (NKPK…IREP). Lys810 is covalently cross-linked (Glycyl lysine isopeptide (Lys-Gly) (interchain with G-Cter in SUMO1); alternate). Residue Lys810 forms a Glycyl lysine isopeptide (Lys-Gly) (interchain with G-Cter in SUMO2); alternate linkage. Lys1206 is covalently cross-linked (Glycyl lysine isopeptide (Lys-Gly) (interchain with G-Cter in SUMO2)). Residues 1219–1282 (SQKMKKAKEQ…SLKGAEGQLQ (64 aa)) form a disordered region. Residues 1228–1248 (QRHLHNKEHFRAKQKEEEEKL) show a composition bias toward basic and acidic residues. Basic residues predominate over residues 1249 to 1259 (KRQKDLRKKLF).

This sequence belongs to the TRAFAC class translation factor GTPase superfamily. Bms1-like GTPase family. BMS1 subfamily. Part of the small subunit (SSU) processome, composed of more than 70 proteins and the RNA chaperone small nucleolar RNA (snoRNA) U3. Interacts with RCL1.

Its subcellular location is the nucleus. It is found in the nucleolus. It carries out the reaction GTP + H2O = GDP + phosphate + H(+). Functionally, GTPase required for the synthesis of 40S ribosomal subunits and for processing of pre-ribosomal RNA (pre-rRNA) at sites A0, A1, and A2. Controls access of pre-rRNA intermediates to RCL1 during ribosome biogenesis by binding RCL1 in a GTP-dependent manner, and delivering it to pre-ribosomes. GTP-binding and/or GTP hydrolysis may induce conformational rearrangements within the BMS1-RCL1 complex allowing the interaction of RCL1 with its RNA substrate. Required for RCL1 import into the nucleus. In Homo sapiens (Human), this protein is Ribosome biogenesis protein BMS1 homolog.